The sequence spans 341 residues: CRISPR-associated endonuclease Cas1 (341 aa).

Glu173, His242, and Glu257 together coordinate Mn(2+).

Belongs to the CRISPR-associated endonuclease Cas1 family. Homodimer, forms a heterotetramer with a Cas2 homodimer. Mg(2+) is required as a cofactor. Mn(2+) serves as cofactor.

Functionally, CRISPR (clustered regularly interspaced short palindromic repeat), is an adaptive immune system that provides protection against mobile genetic elements (viruses, transposable elements and conjugative plasmids). CRISPR clusters contain spacers, sequences complementary to antecedent mobile elements, and target invading nucleic acids. CRISPR clusters are transcribed and processed into CRISPR RNA (crRNA). Acts as a dsDNA endonuclease. Involved in the integration of spacer DNA into the CRISPR cassette. The polypeptide is CRISPR-associated endonuclease Cas1 (Korarchaeum cryptofilum (strain OPF8)).